The sequence spans 143 residues: Glycine cleavage system H protein 1 (143 aa).

The 82-residue stretch at 26-107 (IYSVGMASIL…PYSSWIAKLK (82 aa)) folds into the Lipoyl-binding domain. Lys-67 carries the post-translational modification N6-lipoyllysine.

This sequence belongs to the GcvH family. The glycine cleavage system is composed of four proteins: P, T, L and H. It depends on (R)-lipoate as a cofactor.

In terms of biological role, the glycine cleavage system catalyzes the degradation of glycine. The H protein shuttles the methylamine group of glycine from the P protein to the T protein. The protein is Glycine cleavage system H protein 1 of Aquifex aeolicus (strain VF5).